An 87-amino-acid polypeptide reads, in one-letter code: Small ribosomal subunit protein bS20 (87 aa).

Residues 1 to 22 (MAHHKSALKRIKQNKRKQFRNK) are disordered.

It belongs to the bacterial ribosomal protein bS20 family.

Binds directly to 16S ribosomal RNA. This Geobacter metallireducens (strain ATCC 53774 / DSM 7210 / GS-15) protein is Small ribosomal subunit protein bS20.